We begin with the raw amino-acid sequence, 387 residues long: Probable tRNA sulfurtransferase (387 aa).

The region spanning 67-167 (SLLKNLFTRL…KEHFLIISES (101 aa)) is the THUMP domain. ATP contacts are provided by residues 185–186 (LL), 210–211 (TF), R269, G287, and Q296.

Belongs to the ThiI family.

It localises to the cytoplasm. It catalyses the reaction [ThiI sulfur-carrier protein]-S-sulfanyl-L-cysteine + a uridine in tRNA + 2 reduced [2Fe-2S]-[ferredoxin] + ATP + H(+) = [ThiI sulfur-carrier protein]-L-cysteine + a 4-thiouridine in tRNA + 2 oxidized [2Fe-2S]-[ferredoxin] + AMP + diphosphate. The enzyme catalyses [ThiS sulfur-carrier protein]-C-terminal Gly-Gly-AMP + S-sulfanyl-L-cysteinyl-[cysteine desulfurase] + AH2 = [ThiS sulfur-carrier protein]-C-terminal-Gly-aminoethanethioate + L-cysteinyl-[cysteine desulfurase] + A + AMP + 2 H(+). The protein operates within cofactor biosynthesis; thiamine diphosphate biosynthesis. In terms of biological role, catalyzes the ATP-dependent transfer of a sulfur to tRNA to produce 4-thiouridine in position 8 of tRNAs, which functions as a near-UV photosensor. Also catalyzes the transfer of sulfur to the sulfur carrier protein ThiS, forming ThiS-thiocarboxylate. This is a step in the synthesis of thiazole, in the thiamine biosynthesis pathway. The sulfur is donated as persulfide by IscS. The chain is Probable tRNA sulfurtransferase from Mycoplasma pneumoniae (strain ATCC 29342 / M129 / Subtype 1) (Mycoplasmoides pneumoniae).